Reading from the N-terminus, the 618-residue chain is tRNA 5-methylaminomethyl-2-thiouridine biosynthesis bifunctional protein MnmC (618 aa).

The tRNA (mnm(5)s(2)U34)-methyltransferase stretch occupies residues 1–231; that stretch reads MLQTYAPIDF…KRHMLSAVYE (231 aa). An FAD-dependent cmnm(5)s(2)U34 oxidoreductase region spans residues 256 to 618; it reads IGAGIAGATT…KDIIRGHLNN (363 aa).

In the N-terminal section; belongs to the methyltransferase superfamily. tRNA (mnm(5)s(2)U34)-methyltransferase family. It in the C-terminal section; belongs to the DAO family. The cofactor is FAD.

It is found in the cytoplasm. It carries out the reaction 5-aminomethyl-2-thiouridine(34) in tRNA + S-adenosyl-L-methionine = 5-methylaminomethyl-2-thiouridine(34) in tRNA + S-adenosyl-L-homocysteine + H(+). Its function is as follows. Catalyzes the last two steps in the biosynthesis of 5-methylaminomethyl-2-thiouridine (mnm(5)s(2)U) at the wobble position (U34) in tRNA. Catalyzes the FAD-dependent demodification of cmnm(5)s(2)U34 to nm(5)s(2)U34, followed by the transfer of a methyl group from S-adenosyl-L-methionine to nm(5)s(2)U34, to form mnm(5)s(2)U34. The polypeptide is tRNA 5-methylaminomethyl-2-thiouridine biosynthesis bifunctional protein MnmC (Dichelobacter nodosus (strain VCS1703A)).